A 365-amino-acid chain; its full sequence is Iron-sulfur cluster assembly protein SufC (365 aa).

In terms of domain architecture, ABC transporter spans 118 to 364 (LEINDLHAIE…ESDGYAQFVE (247 aa)). Residue 152-159 (GRNGSGKS) participates in ATP binding.

Belongs to the ABC transporter superfamily. Ycf16 family. In terms of assembly, component of a complex composed of SufB, SufC and SufD in a stoichiometric ratio of 1:2:1. Interacts with SufB. Interacts with SufD; the interaction enhances the ATPase activity of SufC.

The protein resides in the plastid. It localises to the apicoplast. The enzyme catalyses ATP + H2O = ADP + phosphate + H(+). It functions in the pathway cofactor biosynthesis; iron-sulfur cluster biosynthesis. In terms of biological role, participates in the sulfur mobilization (SUF) pathway for iron-sulfur (Fe-S) cluster biogenesis. As part of a complex consisting of SufB-SufC(2)-SufD, involved in assembly of [4Fe-4S] clusters. Exhibits ATPase activity. In Plasmodium berghei (strain Anka), this protein is Iron-sulfur cluster assembly protein SufC.